Here is a 395-residue protein sequence, read N- to C-terminus: Protein TAMALIN (395 aa).

A disordered region spans residues 1-52 (MTLRRLRKLQQKEEAAATPDPAARTPDSEVAPAAPVPTPGPPAAAATPGPPA). Positions 16–33 (AATPDPAARTPDSEVAPA) are enriched in low complexity. Threonine 77 is modified (phosphothreonine). Serine 94 is subject to Phosphoserine. The 90-residue stretch at 101–190 (VLTLEKEDNQ…VLRLETLYGT (90 aa)) folds into the PDZ domain. The segment at 181 to 258 (VLRLETLYGT…GAGLLPGSLP (78 aa)) is interaction with PSCD3. The residue at position 237 (tyrosine 237) is a Phosphotyrosine. Arginine 270 carries the omega-N-methylarginine modification. Residues 293-349 (SEPPALPPPPPPARAFGPGPAETPAVGPGPGPRAALSRSASVRCAGPGGGGGGGAPG) form a disordered region. Pro residues predominate over residues 296 to 305 (PALPPPPPPA). The segment covering 338-348 (GPGGGGGGGAP) has biased composition (gly residues). Residue serine 387 is modified to Phosphoserine.

Heteromer. Composed of TAMALIN, CYTH2 and at least one GRM1. Also interacts with CYTH3, GRM2, GRM3 and GRM5.

It localises to the cytoplasm. The protein resides in the perinuclear region. The protein localises to the cell membrane. Its subcellular location is the postsynaptic cell membrane. In terms of biological role, plays a role in intracellular trafficking and contributes to the macromolecular organization of group 1 metabotropic glutamate receptors (mGluRs) at synapses. This Homo sapiens (Human) protein is Protein TAMALIN.